The chain runs to 340 residues: Phosphoribosylformylglycinamidine cyclo-ligase (340 aa).

Belongs to the AIR synthase family.

Its subcellular location is the cytoplasm. The catalysed reaction is 2-formamido-N(1)-(5-O-phospho-beta-D-ribosyl)acetamidine + ATP = 5-amino-1-(5-phospho-beta-D-ribosyl)imidazole + ADP + phosphate + H(+). The protein operates within purine metabolism; IMP biosynthesis via de novo pathway; 5-amino-1-(5-phospho-D-ribosyl)imidazole from N(2)-formyl-N(1)-(5-phospho-D-ribosyl)glycinamide: step 2/2. This Streptococcus pneumoniae serotype 4 (strain ATCC BAA-334 / TIGR4) protein is Phosphoribosylformylglycinamidine cyclo-ligase.